The primary structure comprises 120 residues: V-type proton ATPase subunit F (120 aa).

Belongs to the V-ATPase F subunit family. In terms of assembly, V-ATPase is a heteromultimeric enzyme composed of a peripheral catalytic V1 complex (components A to H) attached to an integral membrane V0 proton pore complex (components: a, c, c', c'', d, e, f and VOA1).

It localises to the vacuole membrane. Subunit of the V1 complex of vacuolar(H+)-ATPase (V-ATPase), a multisubunit enzyme composed of a peripheral complex (V1) that hydrolyzes ATP and a membrane integral complex (V0) that translocates protons. V-ATPase is responsible for acidifying and maintaining the pH of intracellular compartments. This is V-type proton ATPase subunit F from Schizosaccharomyces pombe (strain 972 / ATCC 24843) (Fission yeast).